We begin with the raw amino-acid sequence, 469 residues long: Neuraminidase (469 aa).

Residues 1–6 are Intravirion-facing; that stretch reads MNPNQK. The helical transmembrane segment at 7-27 threads the bilayer; the sequence is IITIGSICMVVGIISLILQIG. The interval 11 to 33 is involved in apical transport and lipid raft association; it reads GSICMVVGIISLILQIGNIISIW. Topologically, residues 28–469 are virion surface; that stretch reads NIISIWVSHS…GAELPFTIDK (442 aa). A hypervariable stalk region region spans residues 36-90; sequence HSIQTGNQNQPETCNQSIITYENNTWVNQTYVNISNTNFVAEQAVAPVALAGNSS. N-linked (GlcNAc...) asparagine; by host glycosylation is found at Asn-50, Asn-58, Asn-63, Asn-68, and Asn-88. Residues 91-469 are head of neuraminidase; it reads LCPISGWAIY…GAELPFTIDK (379 aa). 8 cysteine pairs are disulfide-bonded: Cys-92-Cys-417, Cys-124-Cys-129, Cys-184-Cys-231, Cys-233-Cys-238, Cys-279-Cys-292, Cys-281-Cys-290, Cys-318-Cys-335, and Cys-421-Cys-446. Residue Arg-118 coordinates substrate. Asn-146 is a glycosylation site (N-linked (GlcNAc...) asparagine; by host). Asp-151 functions as the Proton donor/acceptor in the catalytic mechanism. Arg-152 is a binding site for substrate. A glycan (N-linked (GlcNAc...) asparagine; by host) is linked at Asn-235. Position 277-278 (277-278) interacts with substrate; it reads EE. Arg-293 serves as a coordination point for substrate. Asp-294, Gly-298, and Asp-324 together coordinate Ca(2+). Arg-368 is a binding site for substrate. The active-site Nucleophile is the Tyr-402.

It belongs to the glycosyl hydrolase 34 family. As to quaternary structure, homotetramer. It depends on Ca(2+) as a cofactor. N-glycosylated.

The protein resides in the virion membrane. It is found in the host apical cell membrane. The enzyme catalyses Hydrolysis of alpha-(2-&gt;3)-, alpha-(2-&gt;6)-, alpha-(2-&gt;8)- glycosidic linkages of terminal sialic acid residues in oligosaccharides, glycoproteins, glycolipids, colominic acid and synthetic substrates.. Inhibited by the neuraminidase inhibitors zanamivir (Relenza) and oseltamivir (Tamiflu). These drugs interfere with the release of progeny virus from infected cells and are effective against all influenza strains. Resistance to neuraminidase inhibitors is quite rare. Its function is as follows. Catalyzes the removal of terminal sialic acid residues from viral and cellular glycoconjugates. Cleaves off the terminal sialic acids on the glycosylated HA during virus budding to facilitate virus release. Additionally helps virus spread through the circulation by further removing sialic acids from the cell surface. These cleavages prevent self-aggregation and ensure the efficient spread of the progeny virus from cell to cell. Otherwise, infection would be limited to one round of replication. Described as a receptor-destroying enzyme because it cleaves a terminal sialic acid from the cellular receptors. May facilitate viral invasion of the upper airways by cleaving the sialic acid moieties on the mucin of the airway epithelial cells. Likely to plays a role in the budding process through its association with lipid rafts during intracellular transport. May additionally display a raft-association independent effect on budding. Plays a role in the determination of host range restriction on replication and virulence. Sialidase activity in late endosome/lysosome traffic seems to enhance virus replication. The polypeptide is Neuraminidase (Aves).